The sequence spans 254 residues: Putative biopolymer transport protein ExbB-like 1 (254 aa).

The next 3 membrane-spanning stretches (helical) occupy residues 39–59, 141–161, and 185–205; these read GGVV…TAFE, LETI…TGLI, and IGEA…ALLV.

This sequence belongs to the ExbB/TolQ family.

Its subcellular location is the cell inner membrane. In terms of biological role, involved in the TonB-dependent energy-dependent transport of various receptor-bound substrates. Protects ExbD from proteolytic degradation and functionally stabilizes TonB. This is Putative biopolymer transport protein ExbB-like 1 from Synechocystis sp. (strain ATCC 27184 / PCC 6803 / Kazusa).